An 895-amino-acid polypeptide reads, in one-letter code: Zinc finger protein 281 (895 aa).

Disordered stretches follow at residues 1–44 (MKIG…EMEP) and 63–113 (FTRP…AFPS). A Glycyl lysine isopeptide (Lys-Gly) (interchain with G-Cter in SUMO2) cross-link involves residue lysine 2. The segment covering 7 to 36 (FLSGGGGTGSSGGSGSGGGGSGGGGGGGSS) has biased composition (gly residues). Residues arginine 65, lysine 101, and lysine 128 each participate in a glycyl lysine isopeptide (Lys-Gly) (interchain with G-Cter in SUMO2) cross-link. Composition is skewed to basic and acidic residues over residues 130–140 (EKPADPEEQQS) and 202–218 (RTDD…DTNV). Disordered stretches follow at residues 130 to 149 (EKPA…HHHY) and 183 to 253 (HVQQ…EGAI). Residues lysine 213, lysine 219, lysine 225, lysine 232, lysine 242, and lysine 259 each participate in a glycyl lysine isopeptide (Lys-Gly) (interchain with G-Cter in SUMO2) cross-link. 3 C2H2-type zinc fingers span residues 261 to 283 (HICD…VLIH), 289 to 311 (FQCS…EKIH), and 317 to 339 (FGCD…KRTH). Residues lysine 301 and lysine 325 each participate in a glycyl lysine isopeptide (Lys-Gly) (interchain with G-Cter in SUMO2) cross-link. The C2H2-type 4; atypical zinc finger occupies 345-367 (YKCDTCQQYFSRTDRLLKHRRTC). Lysine 373 is covalently cross-linked (Glycyl lysine isopeptide (Lys-Gly) (interchain with G-Cter in SUMO2)). The disordered stretch occupies residues 377-427 (SAEPGSSNHTNMGNLAVLSQGNTSSSRRKTKSKSIAIENKEQKTGKTNESQ). The segment covering 379–398 (EPGSSNHTNMGNLAVLSQGN) has biased composition (polar residues). Serine 395 is modified (phosphoserine). Glycyl lysine isopeptide (Lys-Gly) (interchain with G-Cter in SUMO2) cross-links involve residues lysine 409, lysine 416, lysine 460, and lysine 477. Residue serine 484 is modified to Phosphoserine. Glycyl lysine isopeptide (Lys-Gly) (interchain with G-Cter in SUMO2) cross-links involve residues lysine 493, lysine 498, lysine 539, lysine 599, lysine 617, and lysine 622. The tract at residues 638-660 (SGEHSELVQEENLSPGTQTPSND) is disordered. Residues 648-660 (ENLSPGTQTPSND) are compositionally biased toward polar residues. The residue at position 651 (serine 651) is a Phosphoserine. Residues lysine 661 and lysine 670 each participate in a glycyl lysine isopeptide (Lys-Gly) (interchain with G-Cter in SUMO2) cross-link. Over residues 778–789 (SSAFQSSSQKLT) the composition is skewed to polar residues. The interval 778-817 (SSAFQSSSQKLTSQKEQKNLESSTGFQIPSQELASQIDPQ) is disordered. Serine 785 carries the phosphoserine modification. Glycyl lysine isopeptide (Lys-Gly) (interchain with G-Cter in SUMO2) cross-links involve residues lysine 787, lysine 792, and lysine 795. Residues 797–815 (LESSTGFQIPSQELASQID) show a composition bias toward polar residues. Serine 807 bears the Phosphoserine mark. Glycyl lysine isopeptide (Lys-Gly) (interchain with G-Cter in SUMO2) cross-links involve residues lysine 818 and lysine 840. A Phosphothreonine modification is found at threonine 888.

This sequence belongs to the krueppel C2H2-type zinc-finger protein family.

It localises to the nucleus. Functionally, transcription repressor that plays a role in regulation of embryonic stem cells (ESCs) differentiation. Required for ESCs differentiation and acts by mediating autorepression of NANOG in ESCs: binds to the NANOG promoter and promotes association of NANOG protein to its own promoter and recruits the NuRD complex, which deacetylates histones. Not required for establishement and maintenance of ESCs. Represses the transcription of a number of genes including GAST, ODC1 and VIM. Binds to the G-rich box in the enhancer region of these genes. The protein is Zinc finger protein 281 (ZNF281) of Homo sapiens (Human).